Consider the following 426-residue polypeptide: Dihydroorotase (426 aa).

Histidine 58 and histidine 60 together coordinate Zn(2+). Substrate contacts are provided by residues 60-62 (HLR) and asparagine 92. Positions 150, 177, and 230 each coordinate Zn(2+). A substrate-binding site is contributed by asparagine 276. Aspartate 303 provides a ligand contact to Zn(2+). Aspartate 303 is an active-site residue. Position 307 (histidine 307) interacts with substrate.

The protein belongs to the metallo-dependent hydrolases superfamily. DHOase family. Class I DHOase subfamily. It depends on Zn(2+) as a cofactor.

The catalysed reaction is (S)-dihydroorotate + H2O = N-carbamoyl-L-aspartate + H(+). The protein operates within pyrimidine metabolism; UMP biosynthesis via de novo pathway; (S)-dihydroorotate from bicarbonate: step 3/3. Its function is as follows. Catalyzes the reversible cyclization of carbamoyl aspartate to dihydroorotate. In Acetivibrio thermocellus (strain ATCC 27405 / DSM 1237 / JCM 9322 / NBRC 103400 / NCIMB 10682 / NRRL B-4536 / VPI 7372) (Clostridium thermocellum), this protein is Dihydroorotase.